The sequence spans 311 residues: Trem-like transcript 1 protein (311 aa).

The N-terminal stretch at 1–15 is a signal peptide; the sequence is MGLTLLLLLLLGLEG. Positions 16 to 121 constitute an Ig-like V-type domain; it reads QGIVGSLPEV…PQILHRVSLN (106 aa). At 16–162 the chain is on the extracellular side; sequence QGIVGSLPEV…EPSQDEKSIP (147 aa). Cystine bridges form between Cys-38/Cys-104 and Cys-52/Cys-59. A helical transmembrane segment spans residues 163-183; sequence LIWGAVLLVGLLVAAVVLFAV. The Cytoplasmic portion of the chain corresponds to 184–311; it reads MAKRKQGNRL…NPPNNQTPSS (128 aa). Cys-196 is lipidated: S-palmitoyl cysteine. Residues 229 to 263 form a disordered region; the sequence is VPHIRLDSPPSFDNTTYTSLPLDSPSGKPSLPAPS. Polar residues predominate over residues 239–249; sequence SFDNTTYTSLP. Positions 279–284 match the ITIM motif; the sequence is VTYATV. Residues 287–311 are disordered; it reads PGGNKGGGTSCGPAQNPPNNQTPSS.

When phosphorylated, interacts with PTPN6. When phosphorylated, interacts with PTPN11. Phosphorylated on tyrosine residues. Detected in platelets, monocytic leukemia and in T-cell leukemia.

The protein resides in the cell membrane. The protein localises to the cytoplasm. Its function is as follows. Cell surface receptor that may play a role in the innate and adaptive immune response. This chain is Trem-like transcript 1 protein (TREML1), found in Homo sapiens (Human).